Reading from the N-terminus, the 428-residue chain is Adenylosuccinate synthetase (428 aa).

GTP-binding positions include 12-18 (GDEGKGK) and 40-42 (GHT). The active-site Proton acceptor is Asp-13. The Mg(2+) site is built by Asp-13 and Gly-40. Residues 13 to 16 (DEGK), 38 to 41 (NAGH), Thr-129, Arg-143, Gln-224, Thr-239, and Arg-303 each bind IMP. The active-site Proton donor is the His-41. Residue 299-305 (VTTGRIR) coordinates substrate. GTP-binding positions include Arg-305, 331-333 (KVD), and 410-412 (AYG).

The protein belongs to the adenylosuccinate synthetase family. As to quaternary structure, homodimer. The cofactor is Mg(2+).

It is found in the cytoplasm. The enzyme catalyses IMP + L-aspartate + GTP = N(6)-(1,2-dicarboxyethyl)-AMP + GDP + phosphate + 2 H(+). It participates in purine metabolism; AMP biosynthesis via de novo pathway; AMP from IMP: step 1/2. In terms of biological role, plays an important role in the de novo pathway of purine nucleotide biosynthesis. Catalyzes the first committed step in the biosynthesis of AMP from IMP. The protein is Adenylosuccinate synthetase of Francisella tularensis subsp. tularensis (strain FSC 198).